Reading from the N-terminus, the 32-residue chain is ATP synthase subunit O, mitochondrial (32 aa).

It belongs to the ATPase delta chain family. F-type ATPases have 2 components, CF(1) - the catalytic core - and CF(0) - the membrane proton channel. CF(1) has five subunits: alpha(3), beta(3), gamma(1), delta(1), epsilon(1). CF(0) has three main subunits: a, b and c.

It localises to the mitochondrion. The protein localises to the mitochondrion inner membrane. Its function is as follows. Mitochondrial membrane ATP synthase (F(1)F(0) ATP synthase or Complex V) produces ATP from ADP in the presence of a proton gradient across the membrane which is generated by electron transport complexes of the respiratory chain. F-type ATPases consist of two structural domains, F(1) - containing the extramembraneous catalytic core and F(0) - containing the membrane proton channel, linked together by a central stalk and a peripheral stalk. During catalysis, ATP synthesis in the catalytic domain of F(1) is coupled via a rotary mechanism of the central stalk subunits to proton translocation. Part of the complex F(0) domain and the peripheric stalk, which acts as a stator to hold the catalytic alpha(3)beta(3) subcomplex and subunit a/ATP6 static relative to the rotary elements. This chain is ATP synthase subunit O, mitochondrial, found in Spinacia oleracea (Spinach).